We begin with the raw amino-acid sequence, 1071 residues long: SLIT-ROBO Rho GTPase-activating protein 2 (1071 aa).

An F-BAR domain is found at 22–325; it reads KEIRAQLTEQ…AVENLDATSD (304 aa). Over residues 181–203 the composition is skewed to basic and acidic residues; it reads LKEAEKQEEKQIGKSVKQEDRQT. The tract at residues 181-211 is disordered; sequence LKEAEKQEEKQIGKSVKQEDRQTPRSPDSTA. S206 carries the post-translational modification Phosphoserine. Residues 362-401 are a coiled coil; it reads VQSELVQRCQQLQSRLSTLKIENEEVKKTMEATLQTIQDI. S427, S500, S691, and S695 each carry phosphoserine. Positions 489–679 constitute a Rho-GAP domain; that stretch reads ARRSSTVRKQ…TIIIQHENIF (191 aa). The interval 698–726 is disordered; the sequence is DYCDSPHGETTSVEDSTQDVTAEHHTSDD. The span at 705–717 shows a compositional bias: polar residues; the sequence is GETTSVEDSTQDV. The residue at position 724 (S724) is a Phosphoserine. The SH3 domain occupies 728–787; that stretch reads CEPIEAIAKFDYVGRTARELSFKKGASLLLYQRASDDWWEGRHNGIDGLIPHQYIVVQDT. S795 carries the post-translational modification Phosphoserine. The segment at 837–936 is disordered; the sequence is QRKRPESGSI…RSKSFNNHRP (100 aa). The span at 855–866 shows a compositional bias: low complexity; sequence HGLSSSLTDSSS. 2 stretches are compositionally biased toward polar residues: residues 874-885 and 897-907; these read RPSSQPIMSQSL and GHGSLNSISRH. S916 carries the post-translational modification Phosphoserine. Residues 919–933 show a composition bias toward polar residues; that stretch reads IRKTATAGRSKSFNN. R927 is modified (symmetric dimethylarginine; by PRMT5). S930 is subject to Phosphoserine. Positions 940–967 form a coiled coil; it reads EVIAQDIEATMNSALNELRELERQSSVK. Residues 983–1012 form a disordered region; it reads SPVVAPTSEPSSPLHTQLLKDPEPAFQRSA. Residues S990, S994, S1013, and S1027 each carry the phosphoserine modification. The segment at 1029–1071 is disordered; that stretch reads KMAAPVKPPATRPKPTVFPKTNATSPGVNSSTSPQSTDKSCTV. A compositionally biased stretch (polar residues) spans 1047–1071; the sequence is PKTNATSPGVNSSTSPQSTDKSCTV.

Homodimer. Heterodimer; forms a heterodimer with SRGAP2C, altering SRGAP2 function. Forms a heterooligomer with SRGAP1 and SRGAP3 through its F-BAR domain. Interacts (via SH3 domain) with GPHN. Interacts (via SH3 domain) with FMNL1 (activated by RAC1); regulates the actin filament severing activity of FMNL1 and actin dynamics. Interacts (via SH3 domain) with FMNL3. Interacts with RAC1; specifically stimulates RAC1 GTPase activity. Interacts (via F-BAR domain) with HOMER1. Interacts with ROBO1 and ROBO2. Interacts with FASLG. Interacts with PRMT5. In terms of processing, methylation at Arg-927 is required for the stimulation of cell migration, dimerization and localization at the plasma membrane protrusions.

It localises to the cell membrane. The protein resides in the cell projection. The protein localises to the dendritic spine. It is found in the postsynaptic density. Its subcellular location is the postsynaptic cell membrane. It localises to the lamellipodium. The protein resides in the cytoplasmic vesicle. The protein localises to the phagosome. It is found in the nucleus. Its subcellular location is the cytoplasm. It localises to the cytosol. Activity is strongly inhibited by SRGAP2C, which heterodimerize with SRGAP2/SRGAP2A, thereby reducing SRGAP2/SRGAP2A levels through proteasome-dependent degradation. Postsynaptic RAC1 GTPase activating protein (GAP) that plays a key role in neuronal morphogenesis and migration mainly during development of the cerebral cortex. Regulates excitatory and inhibitory synapse maturation and density in cortical pyramidal neurons. SRGAP2/SRGAP2A limits excitatory and inhibitory synapse density through its RAC1-specific GTPase activating activity, while it promotes maturation of both excitatory and inhibitory synapses through its ability to bind to the postsynaptic scaffolding protein HOMER1 at excitatory synapses, and the postsynaptic protein GPHN at inhibitory synapses. Mechanistically, acts by binding and deforming membranes, thereby regulating actin dynamics to regulate cell migration and differentiation. Promotes cell repulsion and contact inhibition of locomotion: localizes to protrusions with curved edges and controls the duration of RAC1 activity in contact protrusions. In non-neuronal cells, may also play a role in cell migration by regulating the formation of lamellipodia and filopodia. This Homo sapiens (Human) protein is SLIT-ROBO Rho GTPase-activating protein 2.